The chain runs to 347 residues: Protein phosphatase 1 regulatory subunit 3G (347 aa).

The disordered stretch occupies residues 1-77 (MDPSGEQLHR…ELQEYRRSRA (77 aa)). The span at 13-22 (ASSSTSSGDP) shows a compositional bias: polar residues. Ser-81 is modified (phosphoserine). Residues 200–339 (EERLRRQRVC…NNEGANYTLR (140 aa)) form the CBM21 domain. The tract at residues 258-286 (DPESVEPLPPLQSGDSGSKAEDSEEGPGT) is disordered.

Glycogen-targeting subunit for protein phosphatase 1 (PP1). Involved in the regulation of hepatic glycogenesis in a manner coupled to the fasting-feeding cycle and distinct from other glycogen-targeting subunits. In Mus musculus (Mouse), this protein is Protein phosphatase 1 regulatory subunit 3G (Ppp1r3g).